Reading from the N-terminus, the 336-residue chain is Flavonoid 4'-O-methyltransferase 3 (336 aa).

S-adenosyl-L-methionine-binding residues include Tyr-140 and Asp-203. His-241 acts as the Proton acceptor in catalysis.

This sequence belongs to the class I-like SAM-binding methyltransferase superfamily. Cation-independent O-methyltransferase family. Homodimer. In terms of tissue distribution, expressed in leaves.

The enzyme catalyses scutellarein 7-methyl ether + S-adenosyl-L-methionine = ladanein + S-adenosyl-L-homocysteine + H(+). The catalysed reaction is cirsimaritin + S-adenosyl-L-methionine = salvigenin + S-adenosyl-L-homocysteine + H(+). It carries out the reaction cirsiliol + S-adenosyl-L-methionine = eupatorin + S-adenosyl-L-homocysteine + H(+). It catalyses the reaction genkwanin + S-adenosyl-L-methionine = apigenin 4',7-dimethyl ether + S-adenosyl-L-homocysteine. It functions in the pathway flavonoid metabolism. With respect to regulation, substrate inhibition by genkwanin (GENK) at concentrations above 2.5 mM. Flavonoid 4'-O-methyltransferase involved in the biosynthesis of polymethoxylated flavonoids natural products such as nevadensin and salvigenin, aroma compounds which contribute to the flavor of sweet basil, and exhibit pharmacological activities such as anti-allergic, anti-oxidant, antibacterial, anti-proliferative, and anti-inflammatory effects. Catalyzes S-adenosylmethionine-dependent regioselective 4'-O-methylation of flavonoids; active on various hydroxylated flavonoid substrates, including scutellarein-7-methyl ether (SCU7Me) and cirsimaritin (CIRM), and, with a lower efficiency, hispidulin, ladanein (LAD), cirsioliol (CIRL) and genkwanin (GENK). This is Flavonoid 4'-O-methyltransferase 3 from Ocimum basilicum (Sweet basil).